A 499-amino-acid chain; its full sequence is Cytochrome P450 81Q32 (499 aa).

The helical transmembrane segment at 5-25 (TLLYTFLAVVLLSISLKLFPV) threads the bilayer. Asparagine 112, asparagine 183, and asparagine 266 each carry an N-linked (GlcNAc...) asparagine glycan. Residue cysteine 434 participates in heme binding.

Belongs to the cytochrome P450 family. As to expression, expressed in leaf epidermis and in the leaf internal phloem-associated parenchyma (IPAP) inside the mesophyll.

The protein resides in the membrane. The chain is Cytochrome P450 81Q32 from Catharanthus roseus (Madagascar periwinkle).